The chain runs to 429 residues: MKKQNNLRSLAAQAVEQVVEQGQSLSNVLPPLQQKVADKDKALLQELCFGVLRTLSQLEWLINKLMSRPMTGKQRTVHYLIMVGFYQLLYTRVPPHAALAETVEGAVSIKRPQLKGLINGVLRQFQRQQETLLNEFATSDARFLHPGWLVKRLQNAYPTQWQHIIEANNQRPPMWLRVNRTHHTRDGWLGLLEDAGMKGYPHPDYPDAVRLETPAPVHALPGFAEGWVTVQDASAQGCAVFLAPQNGEHILDLCAAPGGKTTHILEVAPEADVLAVDIDEQRLSRVYDNLKRLGMKATVKQGDGRYPAQWCGEQQFDRILLDAPCSATGVIRRHPDIKWLRRDRDIAELAQLQAEILDAVWPRLKPGGTLVYATCSVLPEENRDQIKTFLQRTPDAALSETGTPDQPGQQNLPGGEEGDGFFYAKLIKK.

Residues 254–260 (CAAPGGK), D277, D303, and D322 contribute to the S-adenosyl-L-methionine site. C375 (nucleophile) is an active-site residue. The segment at 397 to 419 (ALSETGTPDQPGQQNLPGGEEGD) is disordered. Polar residues predominate over residues 400 to 412 (ETGTPDQPGQQNL).

It belongs to the class I-like SAM-binding methyltransferase superfamily. RsmB/NOP family.

The protein localises to the cytoplasm. It catalyses the reaction cytidine(967) in 16S rRNA + S-adenosyl-L-methionine = 5-methylcytidine(967) in 16S rRNA + S-adenosyl-L-homocysteine + H(+). Functionally, specifically methylates the cytosine at position 967 (m5C967) of 16S rRNA. The sequence is that of Ribosomal RNA small subunit methyltransferase B from Salmonella heidelberg (strain SL476).